A 418-amino-acid chain; its full sequence is Serine--tRNA ligase (418 aa).

228-230 provides a ligand contact to L-serine; sequence TSE. ATP-binding positions include 258–260 and Val274; that span reads RKE. Glu281 contributes to the L-serine binding site. 345-348 is an ATP binding site; that stretch reads EVVS. Thr381 contributes to the L-serine binding site.

This sequence belongs to the class-II aminoacyl-tRNA synthetase family. Type-1 seryl-tRNA synthetase subfamily. As to quaternary structure, homodimer. The tRNA molecule binds across the dimer.

The protein localises to the cytoplasm. The enzyme catalyses tRNA(Ser) + L-serine + ATP = L-seryl-tRNA(Ser) + AMP + diphosphate + H(+). The catalysed reaction is tRNA(Sec) + L-serine + ATP = L-seryl-tRNA(Sec) + AMP + diphosphate + H(+). The protein operates within aminoacyl-tRNA biosynthesis; selenocysteinyl-tRNA(Sec) biosynthesis; L-seryl-tRNA(Sec) from L-serine and tRNA(Sec): step 1/1. Its function is as follows. Catalyzes the attachment of serine to tRNA(Ser). Is also able to aminoacylate tRNA(Sec) with serine, to form the misacylated tRNA L-seryl-tRNA(Sec), which will be further converted into selenocysteinyl-tRNA(Sec). The protein is Serine--tRNA ligase of Cenarchaeum symbiosum (strain A).